The sequence spans 207 residues: Mediator of RNA polymerase II transcription subunit 21 (207 aa).

Residues 36–120 form a disordered region; sequence IPPPDVPDAA…APDSPRTFAS (85 aa). Low complexity predominate over residues 91–108; that stretch reads GEGAQTPGPAAGAGADPN. Positions 146 to 194 form a coiled coil; sequence IDSSEAEQEKRIRELEGELRQVEEERELKMRELKRLRRTLENVLTAVET.

Belongs to the Mediator complex subunit 21 family. Component of the Mediator complex.

It localises to the nucleus. Its function is as follows. Component of the Mediator complex, a coactivator involved in the regulated transcription of nearly all RNA polymerase II-dependent genes. Mediator functions as a bridge to convey information from gene-specific regulatory proteins to the basal RNA polymerase II transcription machinery. Mediator is recruited to promoters by direct interactions with regulatory proteins and serves as a scaffold for the assembly of a functional preinitiation complex with RNA polymerase II and the general transcription factors. In Aspergillus fumigatus (strain ATCC MYA-4609 / CBS 101355 / FGSC A1100 / Af293) (Neosartorya fumigata), this protein is Mediator of RNA polymerase II transcription subunit 21 (srb7).